A 1468-amino-acid chain; its full sequence is Neuropathy target esterase sws (1468 aa).

Residues 1 to 34 lie on the Lumenal side of the membrane; it reads MDVLEMLRASASGSYNTIFSDAWCQYVSKQITAT. A helical membrane pass occupies residues 35–55; that stretch reads VYMYCALVMMSLLFIAWFLYF. Residues 56–1468 lie on the Cytoplasmic side of the membrane; the sequence is KRMARLRLRD…RSSPNNETKN (1413 aa). 174 to 301 serves as a coordination point for a nucleoside 3',5'-cyclic phosphate; it reads IFGHFEKPVF…IRVIQVIMIR (128 aa). 2 stretches are compositionally biased toward polar residues: residues 332 to 348 and 357 to 366; these read TMSG…SRQA and NQLNLMQSAA. Residues 332–411 form a disordered region; that stretch reads TMSGPINSQT…DGSFHGTTNL (80 aa). Phosphoserine is present on residues serine 442 and serine 451. A nucleoside 3',5'-cyclic phosphate is bound by residues 480 to 607 and 596 to 723; these read ELGL…VVRR and IVLD…LSHR. The 167-residue stretch at 950 to 1116 folds into the PNPLA domain; sequence LVLGGGGARG…VNNLPGHLWR (167 aa). The GXGXXG signature appears at 954-959; sequence GGGARG. The short motif at 981–985 is the GXSXG element; that stretch reads GVSIG. The active-site Nucleophile is the serine 983. Aspartate 1103 (proton acceptor) is an active-site residue. The short motif at 1103–1105 is the DGA/G element; that stretch reads DGG. At serine 1197 the chain carries Phosphoserine. Residues 1368-1468 form a disordered region; the sequence is ERKMDKSTQS…RSSPNNETKN (101 aa). A compositionally biased stretch (low complexity) spans 1374 to 1383; the sequence is STQSSPPTSS. Positions 1385-1395 are enriched in basic and acidic residues; sequence TDMRGKEEAKH. Residues 1419–1441 show a composition bias toward low complexity; sequence TQTGQEQELQQQQKLQQLQQDQG. Positions 1446-1459 are enriched in basic and acidic residues; the sequence is QLVDKDKEEDKENR.

The protein belongs to the NTE family. Interacts with Pka-C3; interaction inhibits the catalytic function of Pka-C3 and the esterase activity of sws.

Its subcellular location is the endoplasmic reticulum membrane. It carries out the reaction a 1-acyl-sn-glycero-3-phosphocholine + H2O = sn-glycerol 3-phosphocholine + a fatty acid + H(+). Functionally, phospholipase B that deacylates intracellular phosphatidylcholine (PtdCho), generating glycerophosphocholine (GroPtdCho). This deacylation occurs at both sn-2 and sn-1 positions of PtdCho. Its specific chemical modification by certain organophosphorus (OP) compounds leads to distal axonopathy. Plays a role in the signaling mechanism between neurons and glia that regulates glia wrapping during development of the adult brain. Essential for membrane lipid homeostasis and cell survival in both neurons and glia of the adult brain. In Drosophila sechellia (Fruit fly), this protein is Neuropathy target esterase sws.